The primary structure comprises 405 residues: MMFKHLVPLRNGFNKERTSRLKARLFFLSTIFGSILLVFFFCEFLVYYLVIVKCSWPEVKGAHKEDSTPVLKVMFLADTHLLGEIRGHWLDKLRREWQMERSYQSALWLLQPDIVFILGDVFDEGKWSIPQAWSSDVARFQKMFRHPPHTQLIVLVGNHDIGFHYDMTVYKLSRFEKTFNFTSGKLVSPKGINHILSSSFVLLNSMALEGDDCHICRAAEDQLRRISIKLNCSRMREHPDFQKKCKNVEKTPVSAPILLQHYPLYRISDSECTGEDSASPEEKKVLFKEKYDVLSQDASEKLLQLLQPRLILSGHTHSACEVLHQGKIPEISVPSFSWRNRNNPSFIMGSITATKYSLAKCFLPTENTIIYIYCTASVLLTGYVLACLWLCICQRIHSGRKQKPI.

Residues 31-51 traverse the membrane as a helical segment; it reads IFGSILLVFFFCEFLVYYLVI. Residues D78, D120, N158, H261, H315, and H317 each coordinate a divalent metal cation. A helical transmembrane segment spans residues 369–389; it reads IIYIYCTASVLLTGYVLACLW.

It belongs to the metallophosphoesterase superfamily. MPPE1 family. It depends on Mn(2+) as a cofactor.

Its subcellular location is the endoplasmic reticulum-Golgi intermediate compartment membrane. Its function is as follows. Metallophosphoesterase that catalyzes the removal of a side-chain ethanolamine-phosphate (EtNP) from the second mannose of the GPI-anchor protein intermediate. Participates in the glycan remodeling steps of GPI-anchor maturation to allow an efficient transport of GPI-anchor proteins from the endoplasmic reticulum to the Golgi. The polypeptide is Metallophosphoesterase 1 (Xenopus laevis (African clawed frog)).